The following is a 558-amino-acid chain: Atlastin-1 (558 aa).

The interval 1–29 is disordered; it reads MAKSRRDRNSWGGFSEKSSDWSSEEEEPV. Residues 1-34 are N-terminal hypervariable region (HVR); it reads MAKSRRDRNSWGGFSEKSSDWSSEEEEPVRKAGP. At 1 to 449 the chain is on the cytoplasmic side; sequence MAKSRRDRNS…NIFHAARTPA (449 aa). A phosphoserine mark is found at Ser10, Ser22, and Ser23. The 246-residue stretch at 64–309 folds into the GB1/RHD3-type G domain; the sequence is DKEVVAVSVA…LIPWLLSPES (246 aa). Residues Arg77, Lys78, Gly79, Lys80, Ser81, Phe82, Gln148, Arg217, Asp218, Val276, and Asn279 each coordinate GDP. Residues Arg77, Lys78, Gly79, Lys80, Ser81, and Phe82 each contribute to the GTP site. Ser81 contacts Mg(2+). Arg217, Asp218, and Val276 together coordinate GTP. Residues 347–438 form a 3HB (three-helix bundle) domain region; it reads MLQATAEANN…YIQYIKHNDS (92 aa). Lys395 bears the N6-acetyllysine mark. A coiled-coil region spans residues 412-439; that stretch reads EFSRRYLQQLESEIDELYIQYIKHNDSK. The linker stretch occupies residues 439-447; sequence KNIFHAART. The helical transmembrane segment at 450–470 threads the bilayer; sequence TLFVVIFITYVIAGVTGFIGL. A topological domain (lumenal) is located at residue Asp471. A helical membrane pass occupies residues 472–492; it reads IIASLCNMIMGLTLITLCTWA. Residues 493–558 lie on the Cytoplasmic side of the membrane; sequence YIRYSGEYRE…PTEQPEKKKI (66 aa). The segment at 521–558 is autoinhibitory domain; that stretch reads NEALYKLYSAAATHRHLYQQAFPAPKSEPTEQPEKKKI.

This sequence belongs to the TRAFAC class dynamin-like GTPase superfamily. GB1/RHD3 GTPase family. GB1 subfamily. Monomeric and homodimeric. The homodimer, transiently formed by two molecules on opposing membranes, is the active form mediating ER membrane fusion. Interacts with REEP1, REEP5, RTN3 and RTN4 (via the transmembrane region); these proteins are involved in endoplasmic reticulum tubular network organization. Interacts with ZFYVE27; both proteins are involved in endoplasmic reticulum tubular network organization. Interacts with ARL6IP1; both proteins are involved in endoplasmic reticulum tubular network organization. Interacts with SPAST; the interaction is direct, could recruit SPAST to Golgi membranes. Interacts (via N-terminal region) with MAP4K4 (via CNH regulatory domain). May interact with TMED2. Interacts with CPT1C. In terms of processing, phosphorylated. Phosphorylation, by different kinases, of the N-terminal hypervariable region (HVR) regulates the ATL1-mediated membrane tethering step. As to expression, detected in brain where it is abundant in lamina V of the cerebral cortex. Also expressed within the hippocampus, mainly in pyramidal neurons in CA1 and CA3. Weakly expressed in the striatum and more robustly in amygdala and several thalamic nuclei. Also detected in several mesopontine nuclei (at protein level).

Its subcellular location is the endoplasmic reticulum membrane. It localises to the golgi apparatus membrane. The protein localises to the cell projection. It is found in the axon. The catalysed reaction is GTP + H2O = GDP + phosphate + H(+). Atlastin-1 (ATL1) is a membrane-anchored GTPase that mediates the GTP-dependent fusion of endoplasmic reticulum (ER) membranes, maintaining the continuous ER network. It facilitates the formation of three-way junctions where ER tubules intersect. Two atlastin-1 on neighboring ER tubules bind GTP and form loose homodimers through the GB1/RHD3-type G domains and 3HB regions. Upon GTP hydrolysis, the 3HB regions tighten, pulling the membranes together to drive their fusion. After fusion, the homodimer disassembles upon release of inorganic phosphate (Pi). Subsequently, GDP dissociates, resetting the monomers to a conformation ready for a new fusion cycle. May also regulate more or less directly Golgi biogenesis. Indirectly regulates axonal development. This is Atlastin-1 from Rattus norvegicus (Rat).